Reading from the N-terminus, the 274-residue chain is Thiamine kinase (274 aa).

It belongs to the thiamine kinase family.

It catalyses the reaction thiamine + ATP = thiamine phosphate + ADP + H(+). It functions in the pathway cofactor biosynthesis; thiamine diphosphate biosynthesis; thiamine phosphate from thiamine: step 1/1. Its function is as follows. Catalyzes the ATP-dependent phosphorylation of thiamine to thiamine phosphate. Is involved in thiamine salvage. This chain is Thiamine kinase, found in Shigella sonnei (strain Ss046).